Reading from the N-terminus, the 260-residue chain is Ras-related protein Rab-32B (260 aa).

The tract at residues 11–50 (FDTDPDVSTDSNYNNNNNSNNNNSIISNSNNNNNNNNNNV) is disordered. Residues 21 to 49 (SNYNNNNNSNNNNSIISNSNNNNNNNNNN) show a composition bias toward low complexity. 66–73 (GDYAVGKS) serves as a coordination point for GTP. The Effector region signature appears at 88 to 96 (YKLTIGVDF). Residues 115–119 (DIAGH) and 177–180 (NKSD) each bind GTP. Residues 231–260 (TNHPPKPEEDTLELTKTNGEKSDDSKSCCK) form a disordered region. The segment covering 248 to 260 (NGEKSDDSKSCCK) has biased composition (basic and acidic residues). 2 S-geranylgeranyl cysteine lipidation sites follow: cysteine 258 and cysteine 259.

Belongs to the small GTPase superfamily. Rab family.

The polypeptide is Ras-related protein Rab-32B (rab32B) (Dictyostelium discoideum (Social amoeba)).